Consider the following 857-residue polypeptide: Cadherin-related family member 1a (857 aa).

The signal sequence occupies residues 1–25 (MKNAREIQFSSFLLLAHFCFVGAQS). Over 26–709 (DYAPYFYDNG…RENPMHFLGL (684 aa)) the chain is Extracellular. Cadherin domains lie at 40 to 139 (NGNM…RPQF), 140 to 252 (QNMP…PPIF), 253 to 359 (IGTP…PPTF), 365 to 478 (PQNV…APKF), 479 to 582 (TSDF…PPAF), and 574 to 693 (DLND…GPLT). A helical transmembrane segment spans residues 710 to 730 (ISGVILILVFVTVIISTVIFV). Topologically, residues 731-857 (RRNKANRILP…LEQKNMANRY (127 aa)) are cytoplasmic. Residues 746-765 (RKKRKPQKQDDFQEPFREEQ) are disordered. A compositionally biased stretch (basic and acidic residues) spans 752 to 765 (QKQDDFQEPFREEQ).

As to expression, expressed in photoreceptor cells of the outer nuclear layer of the retina and in the pinal gland.

Its subcellular location is the membrane. Its function is as follows. Potential calcium-dependent cell-adhesion protein. Plays a role in the organization of retinal cell layers and Muller glia morphology. The polypeptide is Cadherin-related family member 1a (Danio rerio (Zebrafish)).